The following is a 227-amino-acid chain: Cytidylate kinase (227 aa).

10-18 (GPSGSGKGT) is an ATP binding site.

This sequence belongs to the cytidylate kinase family. Type 1 subfamily.

It is found in the cytoplasm. It carries out the reaction CMP + ATP = CDP + ADP. The catalysed reaction is dCMP + ATP = dCDP + ADP. The polypeptide is Cytidylate kinase (Acinetobacter baylyi (strain ATCC 33305 / BD413 / ADP1)).